The primary structure comprises 297 residues: Cbb3-type cytochrome c oxidase subunit CcoP (297 aa).

Residues 1-35 (MSKKPTTKKEVQTTGHQWDGIEELNTPLPRWWLWT) lie on the Cytoplasmic side of the membrane. Residues 36–56 (FYATIIWGVAYSIAMPAWPIF) traverse the membrane as a helical segment. At 57–297 (SDKATPGLLG…SYVHSLGGGQ (241 aa)) the chain is on the periplasmic side. 2 Cytochrome c domains span residues 108–199 (YTRN…LQIS) and 206–294 (VKAT…HSLG). Cys-121, Cys-124, His-125, Met-174, Cys-219, Cys-222, His-223, and Met-264 together coordinate heme c.

This sequence belongs to the CcoP / FixP family. As to quaternary structure, component of the cbb3-type cytochrome c oxidase at least composed of CcoN, CcoO, CcoQ and CcoP. Interacts with CcoQ. The cofactor is heme c.

Its subcellular location is the cell inner membrane. It functions in the pathway energy metabolism; oxidative phosphorylation. Functionally, C-type cytochrome. Part of the cbb3-type cytochrome c oxidase complex. CcoP subunit is required for transferring electrons from donor cytochrome c via its heme groups to CcoO subunit. From there, electrons are shuttled to the catalytic binuclear center of CcoN subunit where oxygen reduction takes place. The complex also functions as a proton pump. The polypeptide is Cbb3-type cytochrome c oxidase subunit CcoP (Rhodobacter capsulatus (Rhodopseudomonas capsulata)).